The primary structure comprises 1004 residues: Importin subunit beta-5 (1004 aa).

The residue at position 1 (Met1) is an N-acetylmethionine. Residues 21-100 (AETQLLQWCD…REVLLKLCLN (80 aa)) enclose the Importin N-terminal domain.

It belongs to the importin beta family. In terms of assembly, interacts with NAP1.

Its subcellular location is the cytoplasm. The protein localises to the nucleus. It is found in the nuclear pore complex. Required for nuclear protein import and mediates docking of import substrate to distinct nucleoporins. Serves a receptor for nuclear localization signals. Mediates the nuclear import of TATA-binding protein (TBP) and of histones H2A and H2B. The protein is Importin subunit beta-5 (KAP114) of Saccharomyces cerevisiae (strain ATCC 204508 / S288c) (Baker's yeast).